Reading from the N-terminus, the 265-residue chain is Glutamate racemase (265 aa).

Residues 7–8 and 39–40 each bind substrate; these read DS and YG. C70 acts as the Proton donor/acceptor in catalysis. A substrate-binding site is contributed by 71–72; it reads NT. Catalysis depends on C182, which acts as the Proton donor/acceptor. Position 183–184 (183–184) interacts with substrate; it reads TH.

Belongs to the aspartate/glutamate racemases family.

It carries out the reaction L-glutamate = D-glutamate. Its pathway is cell wall biogenesis; peptidoglycan biosynthesis. In terms of biological role, provides the (R)-glutamate required for cell wall biosynthesis. This chain is Glutamate racemase, found in Lachnospira eligens (strain ATCC 27750 / DSM 3376 / VPI C15-48 / C15-B4) (Eubacterium eligens).